Reading from the N-terminus, the 193-residue chain is Potassium-transporting ATPase KdpC subunit (193 aa).

A helical transmembrane segment spans residues 14–34; it reads ITFTFLVLCGLVYPLIVTGIA.

It belongs to the KdpC family. In terms of assembly, the system is composed of three essential subunits: KdpA, KdpB and KdpC.

Its subcellular location is the cell membrane. In terms of biological role, part of the high-affinity ATP-driven potassium transport (or Kdp) system, which catalyzes the hydrolysis of ATP coupled with the electrogenic transport of potassium into the cytoplasm. This subunit acts as a catalytic chaperone that increases the ATP-binding affinity of the ATP-hydrolyzing subunit KdpB by the formation of a transient KdpB/KdpC/ATP ternary complex. This Bacillus cereus (strain B4264) protein is Potassium-transporting ATPase KdpC subunit.